A 183-amino-acid chain; its full sequence is Capsid protein (183 aa).

The segment at Asn136–Cys183 is disordered. The segment covering Val149–Ser176 has biased composition (basic residues). A phosphoserine; by host mark is found at Ser155, Ser162, and Ser170. Residues Ser155–Pro161 form a 1; half-length repeat. A 3 X 8 AA repeats of S-P-R-R-R-[PR]-S-Q region spans residues Ser155–Gln177. A Bipartite nuclear localization signal motif is present at residues Arg158–Arg175. 2 consecutive repeat copies span residues Ser162–Gln169 and Ser170–Gln177. Residues Gln177 to Cys183 are RNA binding.

It belongs to the orthohepadnavirus core antigen family. In terms of assembly, homodimerizes, then multimerizes. Interacts with cytosol exposed regions of viral L glycoprotein present in the reticulum-to-Golgi compartment. Interacts with human FLNB. Phosphorylated form interacts with host importin alpha; this interaction depends on the exposure of the NLS, which itself depends upon genome maturation and/or phosphorylation of the capsid protein. Interacts with host NUP153. In terms of processing, phosphorylated by host SRPK1, SRPK2, and maybe protein kinase C or GAPDH. Phosphorylation is critical for pregenomic RNA packaging. Protein kinase C phosphorylation is stimulated by HBx protein and may play a role in transport of the viral genome to the nucleus at the late step during the viral replication cycle.

It is found in the virion. The protein localises to the host cytoplasm. Its function is as follows. Self assembles to form an icosahedral capsid. Most capsids appear to be large particles with an icosahedral symmetry of T=4 and consist of 240 copies of capsid protein, though a fraction forms smaller T=3 particles consisting of 180 capsid proteins. Entering capsids are transported along microtubules to the nucleus. Phosphorylation of the capsid is thought to induce exposure of nuclear localization signal in the C-terminal portion of the capsid protein that allows binding to the nuclear pore complex via the importin (karyopherin-) alpha and beta. Capsids are imported in intact form through the nuclear pore into the nuclear basket, where it probably binds NUP153. Only capsids that contain the mature viral genome can release the viral DNA and capsid protein into the nucleoplasm. Immature capsids get stuck in the basket. Capsids encapsulate the pre-genomic RNA and the P protein. Pre-genomic RNA is reverse-transcribed into DNA while the capsid is still in the cytoplasm. The capsid can then either be directed to the nucleus, providing more genomes for transcription, or bud through the endoplasmic reticulum to provide new virions. The protein is Capsid protein of Homo sapiens (Human).